An 88-amino-acid polypeptide reads, in one-letter code: Cell division topological specificity factor (88 aa).

Belongs to the MinE family.

Functionally, prevents the cell division inhibition by proteins MinC and MinD at internal division sites while permitting inhibition at polar sites. This ensures cell division at the proper site by restricting the formation of a division septum at the midpoint of the long axis of the cell. This Aromatoleum aromaticum (strain DSM 19018 / LMG 30748 / EbN1) (Azoarcus sp. (strain EbN1)) protein is Cell division topological specificity factor.